The following is a 220-amino-acid chain: 2-hydroxy-3-keto-5-methylthiopentenyl-1-phosphate phosphatase (220 aa).

This sequence belongs to the HAD-like hydrolase superfamily. MtnX family.

It catalyses the reaction 2-hydroxy-5-methylsulfanyl-3-oxopent-1-enyl phosphate + H2O = 1,2-dihydroxy-5-(methylsulfanyl)pent-1-en-3-one + phosphate. Its pathway is amino-acid biosynthesis; L-methionine biosynthesis via salvage pathway; L-methionine from S-methyl-5-thio-alpha-D-ribose 1-phosphate: step 4/6. In terms of biological role, dephosphorylates 2-hydroxy-3-keto-5-methylthiopentenyl-1-phosphate (HK-MTPenyl-1-P) yielding 1,2-dihydroxy-3-keto-5-methylthiopentene (DHK-MTPene). The polypeptide is 2-hydroxy-3-keto-5-methylthiopentenyl-1-phosphate phosphatase (Geobacillus thermodenitrificans (strain NG80-2)).